The following is a 184-amino-acid chain: Phosphodiesterase YfcE (184 aa).

Mn(2+) contacts are provided by Asp9, His11, Asp37, Asn73, His105, His127, and His129.

The protein belongs to the metallophosphoesterase superfamily. YfcE family. It depends on Mn(2+) as a cofactor.

In terms of biological role, shows phosphodiesterase activity. The chain is Phosphodiesterase YfcE (yfcE) from Escherichia coli O157:H7.